Reading from the N-terminus, the 439-residue chain is Xylose isomerase (439 aa).

Catalysis depends on residues His-98 and Asp-101. The Mg(2+) site is built by Glu-229, Glu-265, His-268, Asp-293, Asp-304, Asp-306, and Asp-335.

The protein belongs to the xylose isomerase family. In terms of assembly, homotetramer. The cofactor is Mg(2+).

The protein localises to the cytoplasm. It catalyses the reaction alpha-D-xylose = alpha-D-xylulofuranose. Functionally, involved in D-xylose catabolism. The polypeptide is Xylose isomerase (xylA) (Staphylococcus xylosus).